Here is a 245-residue protein sequence, read N- to C-terminus: 1-(5-phosphoribosyl)-5-[(5-phosphoribosylamino)methylideneamino] imidazole-4-carboxamide isomerase (245 aa).

The active-site Proton acceptor is the Asp8. The active-site Proton donor is Asp131.

It belongs to the HisA/HisF family.

Its subcellular location is the cytoplasm. It catalyses the reaction 1-(5-phospho-beta-D-ribosyl)-5-[(5-phospho-beta-D-ribosylamino)methylideneamino]imidazole-4-carboxamide = 5-[(5-phospho-1-deoxy-D-ribulos-1-ylimino)methylamino]-1-(5-phospho-beta-D-ribosyl)imidazole-4-carboxamide. It functions in the pathway amino-acid biosynthesis; L-histidine biosynthesis; L-histidine from 5-phospho-alpha-D-ribose 1-diphosphate: step 4/9. This is 1-(5-phosphoribosyl)-5-[(5-phosphoribosylamino)methylideneamino] imidazole-4-carboxamide isomerase from Neisseria gonorrhoeae (strain ATCC 700825 / FA 1090).